Here is a 706-residue protein sequence, read N- to C-terminus: Glutamine-dependent NAD(+) synthetase (706 aa).

Residues 5-275 (VTVATCALNQ…VEVLTATLDL (271 aa)) enclose the CN hydrolase domain. Glu45 acts as the Proton acceptor; for glutaminase activity in catalysis. The active-site For glutaminase activity is the Lys114. Cys175 functions as the Nucleophile; for glutaminase activity in the catalytic mechanism. The ligase stretch occupies residues 325–706 (YHSPEEEISL…AEPQSLDGVD (382 aa)). 355–362 (PLSGGVDS) contacts ATP. Ser357 is an active-site residue.

This sequence in the C-terminal section; belongs to the NAD synthetase family. As to quaternary structure, homohexamer.

It catalyses the reaction deamido-NAD(+) + L-glutamine + ATP + H2O = L-glutamate + AMP + diphosphate + NAD(+) + H(+). It participates in cofactor biosynthesis; NAD(+) biosynthesis; NAD(+) from deamido-NAD(+) (L-Gln route): step 1/1. In terms of biological role, catalyzes the final step of the nicotinamide adenine dinucleotide (NAD) de novo synthesis pathway, the ATP-dependent amidation of deamido-NAD using L-glutamine as a nitrogen source. This chain is Glutamine-dependent NAD(+) synthetase (NADSYN1), found in Homo sapiens (Human).